The chain runs to 142 residues: Putative pre-16S rRNA nuclease (142 aa).

It belongs to the YqgF nuclease family.

It is found in the cytoplasm. Its function is as follows. Could be a nuclease involved in processing of the 5'-end of pre-16S rRNA. The chain is Putative pre-16S rRNA nuclease from Shouchella clausii (strain KSM-K16) (Alkalihalobacillus clausii).